Here is a 117-residue protein sequence, read N- to C-terminus: uncharacterized protein (117 aa).

The interval 16 to 56 (FSQSSDGRSNGGGSSSGDSVSTTSDGLLTTGTSPNTSSTSL) is disordered. The span at 31 to 56 (SGDSVSTTSDGLLTTGTSPNTSSTSL) shows a compositional bias: low complexity.

This is an uncharacterized protein from Saccharomyces cerevisiae (strain ATCC 204508 / S288c) (Baker's yeast).